The sequence spans 377 residues: S-adenosylmethionine synthase (377 aa).

His-14 is an ATP binding site. Asp-16 serves as a coordination point for Mg(2+). Glu-42 lines the K(+) pocket. Gln-98 lines the L-methionine pocket. A flexible loop region spans residues Gln-98 to Leu-108. ATP is bound by residues Asp-162–Lys-164, Arg-228–Phe-229, Asp-237, Arg-243–Lys-244, Ala-260, and Lys-264. Asp-237 is an L-methionine binding site. Lys-268 contributes to the L-methionine binding site.

This sequence belongs to the AdoMet synthase family. In terms of assembly, homotetramer; dimer of dimers. Requires Mg(2+) as cofactor. It depends on K(+) as a cofactor.

The protein localises to the cytoplasm. The catalysed reaction is L-methionine + ATP + H2O = S-adenosyl-L-methionine + phosphate + diphosphate. The protein operates within amino-acid biosynthesis; S-adenosyl-L-methionine biosynthesis; S-adenosyl-L-methionine from L-methionine: step 1/1. In terms of biological role, catalyzes the formation of S-adenosylmethionine (AdoMet) from methionine and ATP. The overall synthetic reaction is composed of two sequential steps, AdoMet formation and the subsequent tripolyphosphate hydrolysis which occurs prior to release of AdoMet from the enzyme. This Mesoplasma florum (strain ATCC 33453 / NBRC 100688 / NCTC 11704 / L1) (Acholeplasma florum) protein is S-adenosylmethionine synthase.